The sequence spans 365 residues: MTQRTKTRPVKVGNLTIGGNNELIIQSMTTTKTHDVEATVAEIKRLEEAGCQVVRVAVPDERAANAIADIKKQINIPLVADIHFDYRLALKAIEGGIDKVRINPGNIGRRHKVEAVVNAAKERGIPIRIGVNAGSLERHILEKYGYPTADGMVESALHHIKILEDLDFHDIIVSMKASDVNLAIEAYEKAARAFDYPLHLGITESGTLFAGTVKSAAGLGAILSKGIGNTLRISLSADPVEEVKVARELLKSFGLASNAATLISCPTCGRIEIDLISIANEVEEYISTLKVPIKVAVLGCAVNGPGEAREADIGIAGARGEGLLFRKGQVVRKVPEETMVEELKKEIDVIAAEMAAEREKEKQEQ.

Residues C265, C268, C300, and E307 each contribute to the [4Fe-4S] cluster site.

This sequence belongs to the IspG family. Requires [4Fe-4S] cluster as cofactor.

It carries out the reaction (2E)-4-hydroxy-3-methylbut-2-enyl diphosphate + oxidized [flavodoxin] + H2O + 2 H(+) = 2-C-methyl-D-erythritol 2,4-cyclic diphosphate + reduced [flavodoxin]. Its pathway is isoprenoid biosynthesis; isopentenyl diphosphate biosynthesis via DXP pathway; isopentenyl diphosphate from 1-deoxy-D-xylulose 5-phosphate: step 5/6. Functionally, converts 2C-methyl-D-erythritol 2,4-cyclodiphosphate (ME-2,4cPP) into 1-hydroxy-2-methyl-2-(E)-butenyl 4-diphosphate. The chain is 4-hydroxy-3-methylbut-2-en-1-yl diphosphate synthase (flavodoxin) from Bacillus mycoides (strain KBAB4) (Bacillus weihenstephanensis).